The following is a 161-amino-acid chain: Regulatory protein RecX (161 aa).

It belongs to the RecX family.

The protein localises to the cytoplasm. Functionally, modulates RecA activity. The protein is Regulatory protein RecX of Halorhodospira halophila (strain DSM 244 / SL1) (Ectothiorhodospira halophila (strain DSM 244 / SL1)).